Here is a 534-residue protein sequence, read N- to C-terminus: Cytochrome P450 monooxygenase AN1598 (534 aa).

A glycan (N-linked (GlcNAc...) asparagine) is linked at N3. The chain crosses the membrane as a helical span at residues 25–45; sequence LYLEILGVLSVVYLLQTLVAY. N95 is a glycosylation site (N-linked (GlcNAc...) asparagine). Residue C464 participates in heme binding. An N-linked (GlcNAc...) asparagine glycan is attached at N498.

It belongs to the cytochrome P450 family. Requires heme as cofactor.

The protein resides in the membrane. It participates in secondary metabolite biosynthesis; terpenoid biosynthesis. In terms of biological role, bifunctional terpene synthase; part of the gene cluster that mediates the biosynthesis of the diterpene ent-pimara-8(14),15-diene (PD). Within the cluster, the HMG-CoA reductase AN1593 functions in the mevalonate pathway, which produces isoprenoid precursors. The geranylgeranyl pyrophosphate (GGPP) synthase AN1592 is needed in the formation of GGPP, the precursor for diterpenes. Lastly, the pimaradiene synthase pbcA performs the 2 cyclization steps that convert GGPP to ent-pimara-8(14),15-diene. The putative roles of the remaining cluster enzymes in ent-pimara-8(14),15-diene biosynthesis is unclear. The cytochrome P450 monooxygenase AN1598, the glutathione S-transferase AN1595, the oxidoreductases AN1596 and AN1597 probably function as decorative enzymes. It is possible that in biological conditions the compound is oxidized to ent-pimara-8(14),15-dien-19-oic acid, which is a bioactive diterpene compound predominant in many plant extracts. The chain is Cytochrome P450 monooxygenase AN1598 from Emericella nidulans (strain FGSC A4 / ATCC 38163 / CBS 112.46 / NRRL 194 / M139) (Aspergillus nidulans).